A 367-amino-acid chain; its full sequence is MRPDTADFRTLFLSGVAMLDVRAPLEFARGAFPGAVNLPLMDDAERHEVGLCYAQKGQQAAIELGHQLVSGLRKAARIAAWAEFARAHPDGYLYCFRGGLRSQLVQQWLHAAGVDYPRVTGGYKAMRGFLIETTDAAAAEQQWFVLGGLTGSGKTDVLADVPAAIDLEGHARHRGSAFGRRALAQPPQIDFENALAIDVLRHIDAGWRALLVEDEGRFIGSRDVPQVLTQRMQASPLVWLEASFDERVERVLRDYVQGLAAEFIAEKGSTEGFEAYATRLREAMAGISPRLGGARYGKLSALLDQALAQQAERGEVDLHRGWIEVLLREYYDPMYAFQREQREARIVFRGDRAAVTDWLRAHTAQRG.

The Rhodanese domain occupies 12–135; the sequence is FLSGVAMLDV…MRGFLIETTD (124 aa). Cys-95 functions as the S-selanylcysteine intermediate in the catalytic mechanism.

Belongs to the SelU family. Monomer.

The enzyme catalyses 5-methylaminomethyl-2-thiouridine(34) in tRNA + selenophosphate + (2E)-geranyl diphosphate + H2O + H(+) = 5-methylaminomethyl-2-selenouridine(34) in tRNA + (2E)-thiogeraniol + phosphate + diphosphate. The catalysed reaction is 5-methylaminomethyl-2-thiouridine(34) in tRNA + (2E)-geranyl diphosphate = 5-methylaminomethyl-S-(2E)-geranyl-thiouridine(34) in tRNA + diphosphate. It catalyses the reaction 5-methylaminomethyl-S-(2E)-geranyl-thiouridine(34) in tRNA + selenophosphate + H(+) = 5-methylaminomethyl-2-(Se-phospho)selenouridine(34) in tRNA + (2E)-thiogeraniol. It carries out the reaction 5-methylaminomethyl-2-(Se-phospho)selenouridine(34) in tRNA + H2O = 5-methylaminomethyl-2-selenouridine(34) in tRNA + phosphate. Involved in the post-transcriptional modification of the uridine at the wobble position (U34) of tRNA(Lys), tRNA(Glu) and tRNA(Gln). Catalyzes the conversion of 2-thiouridine (S2U-RNA) to 2-selenouridine (Se2U-RNA). Acts in a two-step process involving geranylation of 2-thiouridine (S2U) to S-geranyl-2-thiouridine (geS2U) and subsequent selenation of the latter derivative to 2-selenouridine (Se2U) in the tRNA chain. In Cupriavidus necator (strain ATCC 17699 / DSM 428 / KCTC 22496 / NCIMB 10442 / H16 / Stanier 337) (Ralstonia eutropha), this protein is tRNA 2-selenouridine synthase.